We begin with the raw amino-acid sequence, 143 residues long: Interleukin-3 (143 aa).

The N-terminal stretch at 1-23 (MSSFPILHLLLLLLGCQVPQAQG) is a signal peptide. N-linked (GlcNAc...) asparagine glycosylation occurs at asparagine 79.

Belongs to the IL-3 family. As to quaternary structure, monomer.

It is found in the secreted. Granulocyte/macrophage colony-stimulating factors are cytokines that act in hematopoiesis by controlling the production, differentiation, and function of 2 related white cell populations of the blood, the granulocytes and the monocytes-macrophages. Its function is as follows. This CSF induces granulocytes, macrophages, mast cells, stem cells, erythroid cells, eosinophils and megakaryocytes. This chain is Interleukin-3 (IL3), found in Canis lupus familiaris (Dog).